We begin with the raw amino-acid sequence, 339 residues long: RNA 3'-terminal phosphate cyclase (339 aa).

ATP is bound by residues D109 and 286-290; that span reads HLADQ. H310 functions as the Tele-AMP-histidine intermediate in the catalytic mechanism.

It belongs to the RNA 3'-terminal cyclase family. Type 1 subfamily.

Its subcellular location is the cytoplasm. The catalysed reaction is a 3'-end 3'-phospho-ribonucleotide-RNA + ATP = a 3'-end 2',3'-cyclophospho-ribonucleotide-RNA + AMP + diphosphate. Catalyzes the conversion of 3'-phosphate to a 2',3'-cyclic phosphodiester at the end of RNA. The mechanism of action of the enzyme occurs in 3 steps: (A) adenylation of the enzyme by ATP; (B) transfer of adenylate to an RNA-N3'P to produce RNA-N3'PP5'A; (C) and attack of the adjacent 2'-hydroxyl on the 3'-phosphorus in the diester linkage to produce the cyclic end product. The biological role of this enzyme is unknown but it is likely to function in some aspects of cellular RNA processing. The chain is RNA 3'-terminal phosphate cyclase from Halobacterium salinarum (strain ATCC 29341 / DSM 671 / R1).